A 435-amino-acid polypeptide reads, in one-letter code: F-box/FBD/LRR-repeat protein At1g51370 (435 aa).

The F-box domain maps to 18 to 64; it reads EDRISQLPEPLISEILFHLSTKDSVRTSALSTKWRYLWQSVPGLDLD. LRR repeat units lie at residues 123 to 148, 170 to 195, 234 to 259, 262 to 287, and 314 to 340; these read VHCF…RLRW, VSYP…ILFS, AKMY…DFVN, GRYQ…VISS, and RFYI…ILEM. Residues 354–406 form the FBD domain; that stretch reads EPNVMVSTVPWCLVSSLKFVELKRSIPRYEGEMELVRYVLTNSTVLKKLRLNV.

The protein is F-box/FBD/LRR-repeat protein At1g51370 of Arabidopsis thaliana (Mouse-ear cress).